Here is a 477-residue protein sequence, read N- to C-terminus: Argininosuccinate lyase (477 aa).

It belongs to the lyase 1 family. Argininosuccinate lyase subfamily.

It localises to the cytoplasm. It carries out the reaction 2-(N(omega)-L-arginino)succinate = fumarate + L-arginine. Its pathway is amino-acid biosynthesis; L-arginine biosynthesis; L-arginine from L-ornithine and carbamoyl phosphate: step 3/3. The chain is Argininosuccinate lyase from Corynebacterium efficiens (strain DSM 44549 / YS-314 / AJ 12310 / JCM 11189 / NBRC 100395).